An 832-amino-acid chain; its full sequence is Valine--tRNA ligase (832 aa).

The 'HIGH' region motif lies at 41–51 (PNVTGKLHLGH). Residues 512 to 516 (KMSKS) carry the 'KMSKS' region motif. An ATP-binding site is contributed by lysine 515. Residues 760 to 831 (FIEISQEQKQ…QIYLEELKWK (72 aa)) are a coiled coil.

This sequence belongs to the class-I aminoacyl-tRNA synthetase family. ValS type 1 subfamily. In terms of assembly, monomer.

Its subcellular location is the cytoplasm. It catalyses the reaction tRNA(Val) + L-valine + ATP = L-valyl-tRNA(Val) + AMP + diphosphate. Its function is as follows. Catalyzes the attachment of valine to tRNA(Val). As ValRS can inadvertently accommodate and process structurally similar amino acids such as threonine, to avoid such errors, it has a 'posttransfer' editing activity that hydrolyzes mischarged Thr-tRNA(Val) in a tRNA-dependent manner. This Mycoplasmopsis synoviae (strain 53) (Mycoplasma synoviae) protein is Valine--tRNA ligase.